Here is a 74-residue protein sequence, read N- to C-terminus: uncharacterized protein (74 aa).

Composition is skewed to basic and acidic residues over residues 1–13 (MKKQ…HQLK) and 20–60 (IKAK…KSFE). The tract at residues 1 to 74 (MKKQKSIDKH…ESQMDWHQYK (74 aa)) is disordered. Residues 64 to 74 (NESQMDWHQYK) are compositionally biased toward polar residues.

This is an uncharacterized protein from Bacillus subtilis (strain 168).